We begin with the raw amino-acid sequence, 360 residues long: Alanine racemase (360 aa).

K34 serves as the catalytic Proton acceptor; specific for D-alanine. Position 34 is an N6-(pyridoxal phosphate)lysine (K34). Residue R129 coordinates substrate. Catalysis depends on Y254, which acts as the Proton acceptor; specific for L-alanine. M302 serves as a coordination point for substrate.

This sequence belongs to the alanine racemase family. Pyridoxal 5'-phosphate is required as a cofactor.

The enzyme catalyses L-alanine = D-alanine. The protein operates within amino-acid biosynthesis; D-alanine biosynthesis; D-alanine from L-alanine: step 1/1. Its function is as follows. Catalyzes the interconversion of L-alanine and D-alanine. May also act on other amino acids. This Pectobacterium carotovorum subsp. carotovorum (strain PC1) protein is Alanine racemase (alr).